The primary structure comprises 556 residues: Urocanate hydratase (556 aa).

NAD(+)-binding positions include 52–53 (GG), Gln130, 176–178 (GMG), Glu196, Arg201, 242–243 (NA), 263–267 (QTSAH), 273–274 (YL), and Tyr322. Residue Cys410 is part of the active site. Gly492 serves as a coordination point for NAD(+).

Belongs to the urocanase family. NAD(+) serves as cofactor.

It is found in the cytoplasm. It catalyses the reaction 4-imidazolone-5-propanoate = trans-urocanate + H2O. It participates in amino-acid degradation; L-histidine degradation into L-glutamate; N-formimidoyl-L-glutamate from L-histidine: step 2/3. Functionally, catalyzes the conversion of urocanate to 4-imidazolone-5-propionate. In Shewanella frigidimarina (strain NCIMB 400), this protein is Urocanate hydratase.